The primary structure comprises 43 residues: Protein PsbN (43 aa).

The chain crosses the membrane as a helical span at residues 7 to 27 (VTIFISGLLVSFTGYALYIAF).

It belongs to the PsbN family.

It localises to the plastid. It is found in the chloroplast thylakoid membrane. In terms of biological role, may play a role in photosystem I and II biogenesis. This Dioscorea bulbifera (Air potato) protein is Protein PsbN.